The chain runs to 492 residues: Variant surface glycoprotein MITAT 1.1 (492 aa).

Positions 1-32 (MATGRAKNTKWARWLSTAGLIIVVTLPATTMA) are cleaved as a signal peptide. Intrachain disulfides connect Cys-47-Cys-177 and Cys-155-Cys-222. 2 N-linked (GlcNAc...) asparagine glycosylation sites follow: Asn-298 and Asn-471. A lipid anchor (GPI-anchor amidated serine) is attached at Ser-475. Residues 476 to 492 (NSFLIHKAPLLLAFLLF) constitute a propeptide, removed in mature form.

Its subcellular location is the cell membrane. Functionally, VSG forms a coat on the surface of the parasite. The trypanosome evades the immune response of the host by expressing a series of antigenically distinct VSGs from an estimated 1000 VSG genes. This Trypanosoma brucei brucei protein is Variant surface glycoprotein MITAT 1.1.